The chain runs to 831 residues: uncharacterized protein (831 aa).

The active-site Tele-phosphohistidine intermediate is the His787.

The protein belongs to the PEP-utilizing enzyme family.

This is an uncharacterized protein from Bacillus subtilis (strain 168).